The chain runs to 525 residues: Sodium-dependent lysophosphatidylcholine symporter 1 (525 aa).

The disordered stretch occupies residues 1–29 (MEKESENASCAGLLGQKNEPGSPTQSRSG). The Cytoplasmic segment spans residues 1-32 (MEKESENASCAGLLGQKNEPGSPTQSRSGKHK). The chain crosses the membrane as a helical span at residues 33 to 62 (LSVCSKICFAIGGAPYQITGCALGFFLQIF). At 63 to 73 (LLDIAQVPPFY) the chain is on the extracellular side. The chain crosses the membrane as a helical span at residues 74 to 94 (ASIILFSGRVWDAITDPLVGF). The Cytoplasmic segment spans residues 95-106 (FVSKSSWTRLGR). Residues 107–126 (LLPWVVFSTPFAVVSYLLIW) traverse the membrane as a helical segment. Residues 127-137 (FVPGFSGVSMV) lie on the Extracellular side of the membrane. Residues 138–162 (IWYLVFYCLFQTLVTCFHVPYSALT) form a helical membrane-spanning segment. At 163-169 (MFISKEQ) the chain is on the cytoplasmic side. The helical transmembrane segment at 170 to 201 (SDRDSATGYRMTVEVLGTVLGTAIQGQIVGRE) threads the bilayer. At 202–226 (NTPCVEHIRETHLYNTSVIMEDLNI) the chain is on the extracellular side. The cysteines at positions 205 and 458 are disulfide-linked. N-linked (GlcNAc...) asparagine glycosylation is found at Asn-216 and Asn-225. The chain crosses the membrane as a helical span at residues 227–260 (THDVESLSSTRDAYMIAAGVICAIYVLCAIILTL). At 261 to 291 (GVREKRDAYELLSDQPFSFWQGLKLVMSHKP) the chain is on the cytoplasmic side. A helical membrane pass occupies residues 292–318 (YIKLITGFLFTSLAFMLLEGNFALFLT). Over 319–329 (YTMGFRRDFQN) the chain is Extracellular. Residues 330-348 (ILLVVMLSATLTVPFWQWF) traverse the membrane as a helical segment. Topologically, residues 349 to 352 (LTRF) are cytoplasmic. A helical transmembrane segment spans residues 353–374 (GKKTAVYFGISSVIPFLILVVL). The Extracellular portion of the chain corresponds to 375–377 (MES). A helical membrane pass occupies residues 378–414 (NLILAYVVAVAAGLSVAAAFLLPWSMLPDVIDDFILK). Residues 415-424 (NPDSHGHEPI) lie on the Cytoplasmic side of the membrane. The helical transmembrane segment at 425 to 451 (FFSFYVFFTKFASGVSLGISTLSLDFA) threads the bilayer. Topologically, residues 452–463 (GYQTRACSQPEQ) are extracellular. Residues 464-487 (VNLTLKMLICVAPVILILLGLLLF) traverse the membrane as a helical segment. Over 488–525 (ILYPINEEKRKQNKKALQLIRESNRDSDSDSLELASNV) the chain is Cytoplasmic.

It belongs to the major facilitator superfamily.

The protein resides in the cell membrane. It localises to the endoplasmic reticulum membrane. It carries out the reaction a 1-acyl-sn-glycero-3-phosphocholine(in) + Na(+)(in) = a 1-acyl-sn-glycero-3-phosphocholine(out) + Na(+)(out). The enzyme catalyses 1-(4Z,7Z,10Z,13Z,16Z,19Z-docosahexaenoyl)-sn-glycero-3-phosphocholine(in) + Na(+)(in) = 1-(4Z,7Z,10Z,13Z,16Z,19Z-docosahexaenoyl)-sn-glycero-3-phosphocholine(out) + Na(+)(out). It catalyses the reaction 1-(9Z-octadecenoyl)-sn-glycero-3-phosphocholine(in) + Na(+)(in) = 1-(9Z-octadecenoyl)-sn-glycero-3-phosphocholine(out) + Na(+)(out). The catalysed reaction is 1-hexadecanoyl-sn-glycero-3-phosphocholine(in) + Na(+)(in) = 1-hexadecanoyl-sn-glycero-3-phosphocholine(out) + Na(+)(out). It carries out the reaction a 1-acyl-sn-glycero-3-phosphoethanolamine(in) + Na(+)(in) = a 1-acyl-sn-glycero-3-phosphoethanolamine(out) + Na(+)(out). Functionally, sodium-dependent lysophosphatidylcholine (LPC) symporter, which plays an essential role for blood-brain barrier formation and function. Specifically expressed in endothelium of the blood-brain barrier of micro-vessels and transports LPC into the brain. Transport of LPC is essential because it constitutes the major mechanism by which docosahexaenoic acid (DHA), an omega-3 fatty acid that is essential for normal brain growth and cognitive function, enters the brain. Transports LPC carrying long-chain fatty acids such LPC oleate and LPC palmitate with a minimum acyl chain length of 14 carbons. Does not transport docosahexaenoic acid in unesterified fatty acid. The chain is Sodium-dependent lysophosphatidylcholine symporter 1 (mfsd2a) from Xenopus tropicalis (Western clawed frog).